The sequence spans 388 residues: Mannitol-1-phosphate 5-dehydrogenase (388 aa).

5–16 contacts NAD(+); sequence AVHFGGGNIGRG. Lys213 is an active-site residue.

It belongs to the mannitol dehydrogenase family. As to quaternary structure, monomer.

It catalyses the reaction D-mannitol 1-phosphate + NAD(+) = beta-D-fructose 6-phosphate + NADH + H(+). Catalyzes the NAD(H)-dependent interconversion of D-fructose 6-phosphate and D-mannitol 1-phosphate in the mannitol metabolic pathway. The protein is Mannitol-1-phosphate 5-dehydrogenase of Ajellomyces capsulatus (strain NAm1 / WU24) (Darling's disease fungus).